Here is a 173-residue protein sequence, read N- to C-terminus: U4/U6.U5 small nuclear ribonucleoprotein component snu23 (173 aa).

A Matrin-type zinc finger spans residues 55–85 (WYCEACNETYKDSLSWLDHLNSTQHLRKTRT). Residues 119 to 149 (SLKERVERYHQELEAKKLRRKQKKVNKEKNS) are a coiled coil.

Component of the 25S U4/U6.U5 tri-snRNP particle, a subcomplex of the spliceosome.

Its subcellular location is the cytoplasm. It localises to the cytoskeleton. The protein resides in the microtubule organizing center. The protein localises to the spindle pole body. It is found in the nucleus. This chain is U4/U6.U5 small nuclear ribonucleoprotein component snu23 (snu23), found in Schizosaccharomyces pombe (strain 972 / ATCC 24843) (Fission yeast).